Consider the following 41-residue polypeptide: Large ribosomal subunit protein bL36 (41 aa).

The protein belongs to the bacterial ribosomal protein bL36 family.

The polypeptide is Large ribosomal subunit protein bL36 (Mesorhizobium japonicum (strain LMG 29417 / CECT 9101 / MAFF 303099) (Mesorhizobium loti (strain MAFF 303099))).